Consider the following 557-residue polypeptide: Probable protein kinase UbiB (557 aa).

Residues 121–509 (AFDTTPLASA…RKLQTRVVTA (389 aa)) form the Protein kinase domain. Residues 127-135 (LASASIAQV) and K154 each bind ATP. D289 acts as the Proton acceptor in catalysis. 2 consecutive transmembrane segments (helical) span residues 506–526 (VVTA…YGLH) and 535–555 (VPVW…IAWL).

The protein belongs to the ABC1 family. UbiB subfamily.

It localises to the cell inner membrane. It functions in the pathway cofactor biosynthesis; ubiquinone biosynthesis [regulation]. Functionally, is probably a protein kinase regulator of UbiI activity which is involved in aerobic coenzyme Q (ubiquinone) biosynthesis. This chain is Probable protein kinase UbiB, found in Xanthomonas campestris pv. campestris (strain 8004).